We begin with the raw amino-acid sequence, 591 residues long: L-fucose isomerase (591 aa).

Residues E338 and D362 each act as proton acceptor in the active site. Residues E338, D362, and H529 each contribute to the Mn(2+) site.

This sequence belongs to the L-fucose isomerase family. It depends on Mn(2+) as a cofactor.

The protein resides in the cytoplasm. It catalyses the reaction L-fucose = L-fuculose. It functions in the pathway carbohydrate degradation; L-fucose degradation; L-lactaldehyde and glycerone phosphate from L-fucose: step 1/3. Converts the aldose L-fucose into the corresponding ketose L-fuculose. The chain is L-fucose isomerase from Bacteroides thetaiotaomicron (strain ATCC 29148 / DSM 2079 / JCM 5827 / CCUG 10774 / NCTC 10582 / VPI-5482 / E50).